A 255-amino-acid polypeptide reads, in one-letter code: Thiazole synthase (255 aa).

K96 serves as the catalytic Schiff-base intermediate with DXP. 1-deoxy-D-xylulose 5-phosphate is bound by residues G157, 183–184 (AG), and 205–206 (NT).

This sequence belongs to the ThiG family. As to quaternary structure, homotetramer. Forms heterodimers with either ThiH or ThiS.

It is found in the cytoplasm. It carries out the reaction [ThiS sulfur-carrier protein]-C-terminal-Gly-aminoethanethioate + 2-iminoacetate + 1-deoxy-D-xylulose 5-phosphate = [ThiS sulfur-carrier protein]-C-terminal Gly-Gly + 2-[(2R,5Z)-2-carboxy-4-methylthiazol-5(2H)-ylidene]ethyl phosphate + 2 H2O + H(+). It functions in the pathway cofactor biosynthesis; thiamine diphosphate biosynthesis. Its function is as follows. Catalyzes the rearrangement of 1-deoxy-D-xylulose 5-phosphate (DXP) to produce the thiazole phosphate moiety of thiamine. Sulfur is provided by the thiocarboxylate moiety of the carrier protein ThiS. In vitro, sulfur can be provided by H(2)S. This chain is Thiazole synthase, found in Geobacillus sp. (strain WCH70).